Here is a 72-residue protein sequence, read N- to C-terminus: Crustacean hyperglycemic hormone (72 aa).

Disulfide bonds link cysteine 7-cysteine 43, cysteine 23-cysteine 39, and cysteine 26-cysteine 52. Valine 72 is subject to Valine amide.

Its subcellular location is the secreted. Hormone found in the sinus gland of isopods and decapods which controls the blood sugar level. Has a secretagogue action over the amylase released from the midgut gland. May act as a stress hormone and may be involved in the control of molting and reproduction. The polypeptide is Crustacean hyperglycemic hormone (Penaeus schmitti (White shrimp)).